Consider the following 321-residue polypeptide: ATP-dependent 6-phosphofructokinase (321 aa).

Gly-11 is a binding site for ATP. 21–25 (RAVVR) contributes to the ADP binding site. ATP contacts are provided by residues 72–73 (RC) and 102–105 (GDGS). Mg(2+) is bound at residue Asp-103. 126-128 (TID) provides a ligand contact to substrate. The active-site Proton acceptor is Asp-128. Arg-155 is an ADP binding site. Substrate contacts are provided by residues Arg-163 and 170–172 (MGR). Residues 186–188 (GAE), Arg-212, and 214–216 (KLH) contribute to the ADP site. Residues Glu-223, Arg-245, and 251 to 254 (HIQR) each bind substrate.

It belongs to the phosphofructokinase type A (PFKA) family. ATP-dependent PFK group I subfamily. Prokaryotic clade 'B1' sub-subfamily. Homotetramer. Mg(2+) serves as cofactor.

The protein localises to the cytoplasm. It carries out the reaction beta-D-fructose 6-phosphate + ATP = beta-D-fructose 1,6-bisphosphate + ADP + H(+). Its pathway is carbohydrate degradation; glycolysis; D-glyceraldehyde 3-phosphate and glycerone phosphate from D-glucose: step 3/4. With respect to regulation, allosterically activated by ADP and other diphosphonucleosides, and allosterically inhibited by phosphoenolpyruvate. Its function is as follows. Catalyzes the phosphorylation of D-fructose 6-phosphate to fructose 1,6-bisphosphate by ATP, the first committing step of glycolysis. In Caldanaerobacter subterraneus subsp. tengcongensis (strain DSM 15242 / JCM 11007 / NBRC 100824 / MB4) (Thermoanaerobacter tengcongensis), this protein is ATP-dependent 6-phosphofructokinase.